A 438-amino-acid chain; its full sequence is Coenzyme A disulfide reductase (438 aa).

8–33 (GAVAGGATCASQIRRLDKESEIIVFE) is an FAD binding site. Substrate-binding residues include Thr15, Gln19, Arg22, Ser39, and Asn42. Cys43 serves as the catalytic Nucleophile. The active-site Redox-active is Cys43. A substrate-binding site is contributed by Lys71. Residue 151–166 (ALVVGAGYISLEVLEN) coordinates NADP(+). 267-277 (TNIPNIYALGD) contacts FAD. Residue His299 participates in substrate binding. Tyr419 provides a ligand contact to FAD. Lys427 lines the substrate pocket.

The protein belongs to the class-III pyridine nucleotide-disulfide oxidoreductase family. As to quaternary structure, homodimer. FAD is required as a cofactor.

The catalysed reaction is NADP(+) + 2 CoA = CoA-disulfide + NADPH + H(+). In terms of biological role, catalyzes specifically the NADPH-dependent reduction of coenzyme A disulfide. In Staphylococcus epidermidis (strain ATCC 35984 / DSM 28319 / BCRC 17069 / CCUG 31568 / BM 3577 / RP62A), this protein is Coenzyme A disulfide reductase.